We begin with the raw amino-acid sequence, 315 residues long: Ribosomal RNA small subunit methyltransferase H (315 aa).

Residues Gly37–His39, Asp57, Phe83, Asp105, and Gln112 contribute to the S-adenosyl-L-methionine site.

It belongs to the methyltransferase superfamily. RsmH family.

Its subcellular location is the cytoplasm. It carries out the reaction cytidine(1402) in 16S rRNA + S-adenosyl-L-methionine = N(4)-methylcytidine(1402) in 16S rRNA + S-adenosyl-L-homocysteine + H(+). Functionally, specifically methylates the N4 position of cytidine in position 1402 (C1402) of 16S rRNA. This Pseudomonas fluorescens (strain ATCC BAA-477 / NRRL B-23932 / Pf-5) protein is Ribosomal RNA small subunit methyltransferase H.